We begin with the raw amino-acid sequence, 711 residues long: MATSSMSKGCFVFKPNSKKRKISLPIEDYFNKGKNEPEDSKLRFETYQLIWQQMKSENERLQEELNKNLFDNLIEFLQKSHSGFQKNSRDLGGQIKLREIPTAALVLGVNVTDHDLTFGSLTEALQNNVTPYVVSLQAKDCPDMKHFLQKLISQLMDCCVDIKSKEEESVHVTQRKTHYSMDSLSSWYMTVTQKTDPKMLSKKRTTSSQWQSPPVVVILKDMESFATKVLQDFIIISSQHLHEFPLILIFGIATSPIIIHRLLPHAVSSLLCIELFQSLSCKEHLTTVLDKLLLTTQFPFKINEKVLQVLTNIFLYHDFSVQNFIKGLQLSLLEHFYSQPLSVLCCNLPEAKRRINFLSNNQCENIRRLPSFRRYVEKQASEKQVALLTNERYLKEETQLLLENLHVYHMNYFLVLRCLHKFTSSLPKYPLGRQIRELYCTCLEKNIWDSEEYASVLQLLRMLAKDELMTILEKCFKVFKSYCENHLGSTAKRIEEFLAQFQSLDETKEEEDASGSQPKGLQKTDLYHLQKSLLEMKELRRSKKQTKFEVLRENVVNFIDCLVREYLLPPETQPLHEVVYFSAAHALREHLNAAPRIALHTALNNPYYYLKNEALKSEEGCIPNIAPDICIAYKLHLECSRLINLVDWSEAFATVVTAAEKMDANSATSEEMNEIIHARFIRAVSELELLGFIKPTKQKTDHVARLTWGGC.

Residues Ser23 and Ser516 each carry the phosphoserine modification.

The protein belongs to the ORC3 family. As to quaternary structure, component of ORC, a complex composed of at least 6 subunits: ORC1, ORC2, ORC3, ORC4, ORC5 and ORC6. ORC is regulated in a cell-cycle dependent manner. It is sequentially assembled at the exit from anaphase of mitosis and disassembled as cells enter S phase. In terms of processing, multi-mono-ubiquitinated by OBI1; ubiquitination is important for efficient DNA replication origin site activation. Ubiquitination levels are low in mitotic and early G1-phAse cells and are induced in late G1-/early S-phase, peaking in S-phase and decrease toward the end of the cell cycle.

The protein localises to the nucleus. Its subcellular location is the chromosome. Its function is as follows. Component of the origin recognition complex (ORC) that binds origins of replication. DNA-binding is ATP-dependent. The specific DNA sequences that define origins of replication have not been identified yet. ORC is required to assemble the pre-replication complex necessary to initiate DNA replication. Binds histone H3 and H4 trimethylation marks H3K9me3, H3K27me3 and H4K20me3. This Homo sapiens (Human) protein is Origin recognition complex subunit 3 (ORC3).